Consider the following 619-residue polypeptide: Leucine aminopeptidase 2 (619 aa).

A peptide is bound by residues 141-143 and 273-278; these read QCQ and PYGGME. H302 provides a ligand contact to Zn(2+). E303 serves as the catalytic Proton acceptor. H306 and E325 together coordinate Zn(2+). The Proton donor role is filled by Y390.

This sequence belongs to the peptidase M1 family. The cofactor is Zn(2+).

Its subcellular location is the cytoplasm. The protein resides in the nucleus. The enzyme catalyses an epoxide + H2O = an ethanediol. Functionally, aminopeptidase that preferentially cleaves di- and tripeptides. Also has low epoxide hydrolase activity (in vitro). Can hydrolyze the epoxide leukotriene LTA(4) but it forms preferentially 5,6-dihydroxy-7,9,11,14-eicosatetraenoic acid rather than the cytokine leukotriene B(4) as the product compared to the homologous mammalian enzyme (in vitro). The protein is Leucine aminopeptidase 2 of Coccidioides immitis (strain RS) (Valley fever fungus).